A 912-amino-acid polypeptide reads, in one-letter code: Tubulin polyglutamylase TTLL7 (912 aa).

One can recognise a TTL domain in the interval 38 to 390 (KGIITANVAG…RTSDKRKNLA (353 aa)). ATP-binding positions include K160, 166–167 (MG), 188–191 (QEYI), and 201–203 (KFD). R227 lines the L-glutamate pocket. 249-250 (TN) provides a ligand contact to ATP. Y251, S252, and K271 together coordinate L-glutamate. Residues D336, E349, and N351 each contribute to the Mg(2+) site. K367 contacts L-glutamate. The interval 388-450 (NLAKQKAEAQ…VSQEEHENRH (63 aa)) is c-MTBD region. 2 disordered regions span residues 547–570 (YGSSDSSYDSSSSSSNSELDENEK) and 658–688 (PTSASRSHSLNRASSYARHLPHGSDTGSTNT). Low complexity predominate over residues 549–563 (SSDSSYDSSSSSSNS). Positions 659-671 (TSASRSHSLNRAS) are enriched in polar residues.

Belongs to the tubulin--tyrosine ligase family. As to quaternary structure, interacts with both alpha- and beta-tubulin (via C-terminal tubulin tails). Mg(2+) is required as a cofactor. In terms of tissue distribution, highly expressed in brain, testis and trachea. Expressed in brain, heart, kidney, liver, lung, muscle and trachea. In the brain, highly expressed in hippocampus, thalamus, olfactory bulb and cerebellum cortex, corpus callosum and striatum.

It localises to the cell projection. It is found in the cilium. Its subcellular location is the cytoplasm. The protein resides in the cytoskeleton. The protein localises to the cilium basal body. It localises to the dendrite. It is found in the perikaryon. The enzyme catalyses L-glutamyl-[protein] + L-glutamate + ATP = gamma-L-glutamyl-L-glutamyl-[protein] + ADP + phosphate + H(+). The catalysed reaction is (L-glutamyl)(n)-gamma-L-glutamyl-L-glutamyl-[protein] + L-glutamate + ATP = (L-glutamyl)(n+1)-gamma-L-glutamyl-L-glutamyl-[protein] + ADP + phosphate + H(+). Polyglutamylase which modifies tubulin, generating polyglutamate side chains of variable lengths on the gamma-carboxyl group of specific glutamate residues within the C-terminal tail of tubulin. Mediates both ATP-dependent initiation and elongation steps of the polyglutamylation reaction. Preferentially modifies the beta-tubulin tail over an alpha-tail. Competes with monoglycylase TTLL3 for modification site on beta-tubulin substrate, thereby creating an anticorrelation between glycylation and glutamylation reactions. Required for neurite growth; responsible for the strong increase in tubulin polyglutamylation during postnatal neuronal maturation. The chain is Tubulin polyglutamylase TTLL7 from Mus musculus (Mouse).